A 266-amino-acid chain; its full sequence is Norfluorocurarine synthase 1 (266 aa).

An AB hydrolase-1 domain is found at 11–121 (HFVLVHGAGH…VMPDAVNPPS (111 aa)). Residues serine 86, aspartate 216, and histidine 244 contribute to the active site.

It belongs to the AB hydrolase superfamily. In terms of assembly, homodimer.

The enzyme catalyses 17-dehydropreakuammicine + H2O = norfluorocurarine + methanol + CO2. Its pathway is alkaloid biosynthesis. In terms of biological role, hydrolase involved in the biosynthesis of curare monoterpene indole alkaloids (MIAs), natural products such as diaboline, a pharmacologically active compound used to regulate blood pressure. Curare alkaloids act as animal glycine receptor antagonists. Catalyzes the conversion of dehydropreakuammicine to norfluorocurarine. The chain is Norfluorocurarine synthase 1 from Strychnos sp.